The following is a 196-amino-acid chain: SPRY domain-containing protein 7 (196 aa).

Ala2 bears the N-acetylalanine mark. Positions 2–184 (ATSVLCCLRC…FSEFYHTPPP (183 aa)) constitute a B30.2/SPRY domain.

In Homo sapiens (Human), this protein is SPRY domain-containing protein 7 (SPRYD7).